Reading from the N-terminus, the 179-residue chain is Bifunctional protein PyrR (179 aa).

The PRPP-binding signature appears at 99–111; sequence VILIDDVLYTGRT.

The protein belongs to the purine/pyrimidine phosphoribosyltransferase family. PyrR subfamily. Homodimer and homohexamer; in equilibrium.

The catalysed reaction is UMP + diphosphate = 5-phospho-alpha-D-ribose 1-diphosphate + uracil. In terms of biological role, regulates transcriptional attenuation of the pyrimidine nucleotide (pyr) operon by binding in a uridine-dependent manner to specific sites on pyr mRNA. This disrupts an antiterminator hairpin in the RNA and favors formation of a downstream transcription terminator, leading to a reduced expression of downstream genes. Functionally, also displays a weak uracil phosphoribosyltransferase activity which is not physiologically significant. The protein is Bifunctional protein PyrR of Latilactobacillus sakei subsp. sakei (strain 23K) (Lactobacillus sakei subsp. sakei).